An 84-amino-acid chain; its full sequence is MSPLAQVLALPVRAYRLLLSPWVGHGCRYQPTCSVYALDALERHGALKGGWLAARRILSCHPWGGSGYDPVPGADPEHDRRPRG.

The disordered stretch occupies residues 63-84; that stretch reads WGGSGYDPVPGADPEHDRRPRG. The span at 75–84 shows a compositional bias: basic and acidic residues; it reads DPEHDRRPRG.

The protein belongs to the UPF0161 family.

The protein resides in the cell inner membrane. Its function is as follows. Could be involved in insertion of integral membrane proteins into the membrane. The sequence is that of Putative membrane protein insertion efficiency factor from Cereibacter sphaeroides (strain ATCC 17029 / ATH 2.4.9) (Rhodobacter sphaeroides).